The following is a 342-amino-acid chain: Transmembrane protein 268 (342 aa).

2 helical membrane-spanning segments follow: residues 106 to 126 (AFAV…SQMF) and 133 to 153 (AGVL…VLVF). The segment at 245–267 (VEGPEDLEDAPLLPSTPGPQERP) is disordered.

Interacts with ITGAM; this interaction inhibits ITGAM degradation via the endosome-lysosome pathway. Interacts with ITGB4; this interaction prevents ITGB4 degradation.

The protein resides in the cell membrane. Functionally, stabilizes cell surface expression of ITGAM and participates in the adhesion and migration of phagocytes during bacterial clearance. The chain is Transmembrane protein 268 from Mus musculus (Mouse).